Here is a 315-residue protein sequence, read N- to C-terminus: MKRKIVILLGPTGVGKTELSIKIAKLLNAEIISSDSMQIYKYMDIGTAKPTLEQRKEVIHHMIDIVNPWDYFSTGAYIEIVKEVIEKIFEREKIPLVVGGTGLYLRAMTEGIFEGPDADWNLRMELMNKERDNPGFLYNLLKEIDPIKADKIYPSDLRRILRALEVFFKEKKQISELQEKLTKPLSYNFIKIGVTRERKELYRIIEERVDKMICSGLIEEVRNVLTLIKRNATSLSPLPALQAIGYKEIAGCLADLYSIDEAVRLIKKRTKMYAKRQFTWFRKEKDIMWFDISGRHDFEIIAEQIYSALSEILHK.

An ATP-binding site is contributed by 10–17 (GPTGVGKT). 12 to 17 (TGVGKT) lines the substrate pocket. The interval 35–38 (DSMQ) is interaction with substrate tRNA.

This sequence belongs to the IPP transferase family. Monomer. Mg(2+) serves as cofactor.

It catalyses the reaction adenosine(37) in tRNA + dimethylallyl diphosphate = N(6)-dimethylallyladenosine(37) in tRNA + diphosphate. Functionally, catalyzes the transfer of a dimethylallyl group onto the adenine at position 37 in tRNAs that read codons beginning with uridine, leading to the formation of N6-(dimethylallyl)adenosine (i(6)A). This is tRNA dimethylallyltransferase from Thermodesulfovibrio yellowstonii (strain ATCC 51303 / DSM 11347 / YP87).